The following is a 958-amino-acid chain: Probable protein phosphatase DDB_G0282105 (958 aa).

2 helical membrane passes run 2–22 and 26–46; these read VLMMDIKIMSAFSILFLSLMV and FLEFLANTVYAAILFIIILFF. The stretch at 142–330 forms a coiled coil; the sequence is SASQQSELTN…KDKERERSSS (189 aa). Basic and acidic residues predominate over residues 312–328; that stretch reads QEKEKQKLEKDKERERS. Disordered stretches follow at residues 312-361, 380-421, 445-475, 491-525, and 619-659; these read QEKE…PIPI, SVNG…PKFK, HLGSDFFTPANTTTSTTTTTSTTSTSTTTPI, ITSPTTNTTNDILSSSSSSSSSSSSLLTTNAILSP, and NNNN…NDNK. 5 stretches are compositionally biased toward low complexity: residues 329-361, 390-401, 452-475, 491-515, and 619-655; these read SSFSSDISSSSTTSTTASTFLSSSPSKSIPIPI, SSVSPPSSSYLR, TPANTTTSTTTTTSTTSTSTTTPI, ITSPTTNTTNDILSSSSSSSSSSSS, and NNNNKNNIEESNNNNNNNNNNNNNNNNNNNNNNNNNK. The stretch at 613–666 forms a coiled coil; it reads NFLKTNNNNNKNNIEESNNNNNNNNNNNNNNNNNNNNNNNNNKNDNKEVNSKLE. The region spanning 675–958 is the PPM-type phosphatase domain; that stretch reads KIGLRRAKKK…DNVTVIIVKL (284 aa). Positions 722, 723, 905, and 949 each coordinate Mn(2+).

It in the C-terminal section; belongs to the PP2C family. Mg(2+) serves as cofactor. Mn(2+) is required as a cofactor.

The protein localises to the membrane. It carries out the reaction O-phospho-L-seryl-[protein] + H2O = L-seryl-[protein] + phosphate. The catalysed reaction is O-phospho-L-threonyl-[protein] + H2O = L-threonyl-[protein] + phosphate. The sequence is that of Probable protein phosphatase DDB_G0282105 from Dictyostelium discoideum (Social amoeba).